Reading from the N-terminus, the 475-residue chain is 3-isopropylmalate dehydratase large subunit (475 aa).

3 residues coordinate [4Fe-4S] cluster: Cys-352, Cys-412, and Cys-415.

The protein belongs to the aconitase/IPM isomerase family. LeuC type 1 subfamily. Heterodimer of LeuC and LeuD. Requires [4Fe-4S] cluster as cofactor.

The enzyme catalyses (2R,3S)-3-isopropylmalate = (2S)-2-isopropylmalate. It participates in amino-acid biosynthesis; L-leucine biosynthesis; L-leucine from 3-methyl-2-oxobutanoate: step 2/4. In terms of biological role, catalyzes the isomerization between 2-isopropylmalate and 3-isopropylmalate, via the formation of 2-isopropylmaleate. The protein is 3-isopropylmalate dehydratase large subunit of Gluconobacter oxydans (strain 621H) (Gluconobacter suboxydans).